The chain runs to 492 residues: Pyrin and HIN domain-containing protein 1 (492 aa).

The Pyrin domain maps to 1–88 (MANNYKKIVL…AETLKREKLK (88 aa)). 2 disordered regions span residues 106-199 (KTKQ…KPLA) and 400-492 (KNTN…PAVP). Over residues 142–159 (PSEEETGTKRSKMSKEQT) the composition is skewed to basic and acidic residues. Polar residues predominate over residues 160–173 (RPSCSAGASTSTAM). A compositionally biased stretch (low complexity) spans 181–194 (TSSSAPPNTSSTES). Residues 199 to 399 (ANRHATASKN…SEMHSFIQIQ (201 aa)) form the HIN-200 domain. Composition is skewed to polar residues over residues 416–432 (QEQS…TTLP) and 460–492 (GAQS…PAVP).

Belongs to the HIN-200 family. As to quaternary structure, interacts with MDM2. As to expression, expressed in spleen, lymph node and peripheral blood leukocytes, and at lower levels in thymus, bone marrow and fetal liver. Down-regulated in breast tumors.

The protein localises to the nucleus. It localises to the nucleoplasm. The protein resides in the nucleus speckle. Functionally, major mediator of the tumor suppressor activity of IFN in breast cancer cells. Promotes ubiquitination and subsequent degradation of MDM2, which leads to p53/TP53 stabilization. Promotes ubiquitination and subsequent degradation of HDAC1, which in turn enhances maspin expression, and impairs invasive activity of cancer cells. In Homo sapiens (Human), this protein is Pyrin and HIN domain-containing protein 1 (PYHIN1).